The chain runs to 1025 residues: Multidrug resistance protein MdtC (1025 aa).

The next 12 membrane-spanning stretches (helical) occupy residues 3–23, 333–353, 360–380, 387–407, 431–451, 463–483, 528–548, 853–873, 875–895, 897–917, 953–973, and 984–1004; these read FFAL…AITL, EVEQ…FLFL, LIPA…MYLC, LSLM…IVVL, VGFT…PLLL, FAVT…TLTP, IVGL…ITIP, VILI…LYES, VHPL…LLAL, LFDA…IGIV, PIMM…ISSG, and ITIV…TPVV.

This sequence belongs to the resistance-nodulation-cell division (RND) (TC 2.A.6) family. MdtC subfamily. Part of a tripartite efflux system composed of MdtA, MdtB and MdtC. MdtC forms a heteromultimer with MdtB.

The protein resides in the cell inner membrane. The sequence is that of Multidrug resistance protein MdtC from Enterobacter sp. (strain 638).